Here is a 388-residue protein sequence, read N- to C-terminus: Succinate--CoA ligase [ADP-forming] subunit beta (388 aa).

Residues 9–244 (KQLFAEYGLP…PSQDDPREAH (236 aa)) form the ATP-grasp domain. ATP contacts are provided by residues lysine 46, 53–55 (GRG), glutamate 99, threonine 102, and glutamate 107. Asparagine 199 and aspartate 213 together coordinate Mg(2+). Residues asparagine 264 and 321–323 (GIV) each bind substrate.

The protein belongs to the succinate/malate CoA ligase beta subunit family. Heterotetramer of two alpha and two beta subunits. Requires Mg(2+) as cofactor.

It carries out the reaction succinate + ATP + CoA = succinyl-CoA + ADP + phosphate. The catalysed reaction is GTP + succinate + CoA = succinyl-CoA + GDP + phosphate. The protein operates within carbohydrate metabolism; tricarboxylic acid cycle; succinate from succinyl-CoA (ligase route): step 1/1. Succinyl-CoA synthetase functions in the citric acid cycle (TCA), coupling the hydrolysis of succinyl-CoA to the synthesis of either ATP or GTP and thus represents the only step of substrate-level phosphorylation in the TCA. The beta subunit provides nucleotide specificity of the enzyme and binds the substrate succinate, while the binding sites for coenzyme A and phosphate are found in the alpha subunit. The protein is Succinate--CoA ligase [ADP-forming] subunit beta of Pseudomonas fluorescens (strain ATCC BAA-477 / NRRL B-23932 / Pf-5).